The following is a 410-amino-acid chain: NADH-quinone oxidoreductase subunit H (410 aa).

A run of 9 helical transmembrane segments spans residues 11–31, 79–99, 119–139, 160–180, 192–212, 257–277, 283–303, 317–337, and 347–367; these read LVAAKAIAVFVFLMLTVLVAI, FVYFVAPIISVIPAFTAFAFI, LPVAVLFILGLSAIGVYGIVL, VISYEVAMGLSFATVFLMAGT, GVWYAFLLLPSFVIYLISMVG, ALAATLFFGGWHAPWPLNMWA, WWPLIWFTAKVWGFLFIYFWL, ALGWKLLIPVSLVWVMVAAII, and YWTPTLVFSSIVVAAAMVLLL. A disordered region spans residues 376–410; that stretch reads ARASARQRGDEGTSPEPAFPTPPLLAGATKENAGG.

It belongs to the complex I subunit 1 family. As to quaternary structure, NDH-1 is composed of 14 different subunits. Subunits NuoA, H, J, K, L, M, N constitute the membrane sector of the complex.

Its subcellular location is the cell membrane. It catalyses the reaction a quinone + NADH + 5 H(+)(in) = a quinol + NAD(+) + 4 H(+)(out). Its function is as follows. NDH-1 shuttles electrons from NADH, via FMN and iron-sulfur (Fe-S) centers, to quinones in the respiratory chain. The immediate electron acceptor for the enzyme in this species is believed to be menaquinone. Couples the redox reaction to proton translocation (for every two electrons transferred, four hydrogen ions are translocated across the cytoplasmic membrane), and thus conserves the redox energy in a proton gradient. This chain is NADH-quinone oxidoreductase subunit H, found in Mycobacterium bovis (strain ATCC BAA-935 / AF2122/97).